A 404-amino-acid chain; its full sequence is L-cysteine:1D-myo-inositol 2-amino-2-deoxy-alpha-D-glucopyranoside ligase (404 aa).

A disordered region spans residues 1–20 (MRTWPTPDVPPLPRTGAPAP). C45 contributes to the Zn(2+) binding site. L-cysteinyl-5'-AMP-binding positions include 45 to 48 (CGIT), T60, and 83 to 85 (NVT). Positions 47–57 (ITPYDATHLGH) match the 'HIGH' region motif. A 'ERGGDP' region motif is present at residues 185-190 (ERGGDP). Residues 185–216 (ERGGDPDRPGKKHPLDPALWRGEQPGEPSWDG) form a disordered region. Residues 186–199 (RGGDPDRPGKKHPL) are compositionally biased toward basic and acidic residues. W226 contributes to the L-cysteinyl-5'-AMP binding site. C230 contacts Zn(2+). An L-cysteinyl-5'-AMP-binding site is contributed by 248–250 (GAD). A Zn(2+)-binding site is contributed by H255. L280 provides a ligand contact to L-cysteinyl-5'-AMP. A 'KMSKS' region motif is present at residues 286 to 290 (KMSKS).

Belongs to the class-I aminoacyl-tRNA synthetase family. MshC subfamily. As to quaternary structure, monomer. It depends on Zn(2+) as a cofactor.

The catalysed reaction is 1D-myo-inositol 2-amino-2-deoxy-alpha-D-glucopyranoside + L-cysteine + ATP = 1D-myo-inositol 2-(L-cysteinylamino)-2-deoxy-alpha-D-glucopyranoside + AMP + diphosphate + H(+). Catalyzes the ATP-dependent condensation of GlcN-Ins and L-cysteine to form L-Cys-GlcN-Ins. This is L-cysteine:1D-myo-inositol 2-amino-2-deoxy-alpha-D-glucopyranoside ligase from Xylanimonas cellulosilytica (strain DSM 15894 / JCM 12276 / CECT 5975 / KCTC 9989 / LMG 20990 / NBRC 107835 / XIL07).